A 427-amino-acid chain; its full sequence is Serine--tRNA ligase (427 aa).

231–233 (TAE) contacts L-serine. ATP contacts are provided by residues 262 to 264 (RRE) and Val-278. Residue Glu-285 coordinates L-serine. An ATP-binding site is contributed by 349–352 (EVSS). Ser-384 is a binding site for L-serine.

Belongs to the class-II aminoacyl-tRNA synthetase family. Type-1 seryl-tRNA synthetase subfamily. As to quaternary structure, homodimer. The tRNA molecule binds across the dimer.

It is found in the cytoplasm. The enzyme catalyses tRNA(Ser) + L-serine + ATP = L-seryl-tRNA(Ser) + AMP + diphosphate + H(+). It carries out the reaction tRNA(Sec) + L-serine + ATP = L-seryl-tRNA(Sec) + AMP + diphosphate + H(+). It participates in aminoacyl-tRNA biosynthesis; selenocysteinyl-tRNA(Sec) biosynthesis; L-seryl-tRNA(Sec) from L-serine and tRNA(Sec): step 1/1. Its function is as follows. Catalyzes the attachment of serine to tRNA(Ser). Is also able to aminoacylate tRNA(Sec) with serine, to form the misacylated tRNA L-seryl-tRNA(Sec), which will be further converted into selenocysteinyl-tRNA(Sec). This Chlamydia pneumoniae (Chlamydophila pneumoniae) protein is Serine--tRNA ligase.